Reading from the N-terminus, the 421-residue chain is E3 ubiquitin-protein ligase RMD5 (421 aa).

The 61-residue stretch at 176 to 236 (EFIEMGQIVH…QIVKHGNPVE (61 aa)) folds into the CTLH domain. The segment at 361–404 (CPVLKEETTTENPPYSLACHHIISKKALDRLSKNGTITFKCPYC) adopts an RING-Gid-type zinc-finger fold.

It belongs to the RMD5/GID2 family. Identified in the GID/CTLH complex. In the absence of stress, the complex exists as an inactive anticipatory complex (GID(Ant)), composed of VID30/GID1, the E3 ubiquitin-ligase RMD5/GID2, VID28/GID5, GID8, and the RING-like subunit FYV10/GID9, awaiting a substrate receptor to form the active E3 ligase complex. When cells are shifted to glucose-containing medium, the substrate receptor VID24/GID4 is induced and becomes part of the complex, named GID(SR4). Additionally, GID7 transforms the GID(SR4) E3 ligase core into a higher-order supramolecular assembly (Chelator-GID(SR4)) specifically tailored for FBP1 ubiquitination. Under osmotic or heat stress, the substrate receptor GID10 is induced and becomes part of the complex, named GID(SR10). Within the GID complex, interacts directly with GID8, FYV10/GID9 and VID28/GID5.

It localises to the cytoplasm. The catalysed reaction is S-ubiquitinyl-[E2 ubiquitin-conjugating enzyme]-L-cysteine + [acceptor protein]-L-lysine = [E2 ubiquitin-conjugating enzyme]-L-cysteine + N(6)-ubiquitinyl-[acceptor protein]-L-lysine.. It participates in protein modification; protein ubiquitination. Functionally, E3 ubiquitin-protein ligase component of the GID E3 ligase complex recruiting N termini and catalyzing ubiquitination of proteins targeted for degradation. GID E3 is regulated through assembly with interchangeable N-degron-binding substrate receptors induced by distinct environmental perturbations. Required for the adaptation to the presence of glucose in the growth medium; mediates in association with the substrate receptor VID24/GID4 the degradation of enzymes involved in gluconeogenesis when cells are shifted to glucose-containing medium. Required for proteasome-dependent catabolite degradation of fructose-1,6-bisphosphatase (FBP1), malate dehydrogenase (MDH2), and other gluconeogenic enzymes. The chain is E3 ubiquitin-protein ligase RMD5 from Saccharomyces cerevisiae (strain ATCC 204508 / S288c) (Baker's yeast).